Reading from the N-terminus, the 339-residue chain is Dihydroorotate dehydrogenase (quinone) (339 aa).

FMN contacts are provided by residues 62 to 66 and Thr-86; that span reads AGMDK. Lys-66 provides a ligand contact to substrate. 111-115 lines the substrate pocket; that stretch reads NRMGF. 2 residues coordinate FMN: Asn-139 and Asn-172. Asn-172 is a binding site for substrate. The active-site Nucleophile is Ser-175. Residue Asn-177 coordinates substrate. FMN is bound by residues Lys-217 and Thr-245. 246 to 247 contributes to the substrate binding site; it reads NT. Residues Gly-268, Gly-297, and 318 to 319 each bind FMN; that span reads YS.

This sequence belongs to the dihydroorotate dehydrogenase family. Type 2 subfamily. In terms of assembly, monomer. It depends on FMN as a cofactor.

It is found in the cell membrane. It catalyses the reaction (S)-dihydroorotate + a quinone = orotate + a quinol. The protein operates within pyrimidine metabolism; UMP biosynthesis via de novo pathway; orotate from (S)-dihydroorotate (quinone route): step 1/1. Functionally, catalyzes the conversion of dihydroorotate to orotate with quinone as electron acceptor. This chain is Dihydroorotate dehydrogenase (quinone), found in Shewanella pealeana (strain ATCC 700345 / ANG-SQ1).